Consider the following 41-residue polypeptide: Large ribosomal subunit protein bL36 (41 aa).

The protein belongs to the bacterial ribosomal protein bL36 family.

The polypeptide is Large ribosomal subunit protein bL36 (Opitutus terrae (strain DSM 11246 / JCM 15787 / PB90-1)).